Consider the following 246-residue polypeptide: MTQTFADQKRKTVETAEFTEDGRYKRKVRSFVLRTGRLSEFQRNMMNDNWGTLGLDYQTEPFDFAKIYGNDNPVVLEIGFGMGKSLVDMAFANPDKNYLGIEVHTPGVGACIAYAVEKGVTNLRVICHDATEILRDSIADGALGGLQLFFPDPWHKAKHHKRRIVQPHFVTQVIQKLGENGFIHMATDWENYAEQMLEVLSANTDLVNTSKNGDYIPRPDFRPLTKFEARGYKLGHGVWDLYFVKK.

S-adenosyl-L-methionine contacts are provided by Glu77, Glu102, Asp129, and Asp152. Asp152 is a catalytic residue. Residues Lys156, Asp188, and 225–228 (TKFE) each bind substrate.

It belongs to the class I-like SAM-binding methyltransferase superfamily. TrmB family.

The enzyme catalyses guanosine(46) in tRNA + S-adenosyl-L-methionine = N(7)-methylguanosine(46) in tRNA + S-adenosyl-L-homocysteine. Its pathway is tRNA modification; N(7)-methylguanine-tRNA biosynthesis. Catalyzes the formation of N(7)-methylguanine at position 46 (m7G46) in tRNA. This is tRNA (guanine-N(7)-)-methyltransferase from Haemophilus influenzae (strain ATCC 51907 / DSM 11121 / KW20 / Rd).